The chain runs to 427 residues: Glutamate-1-semialdehyde 2,1-aminomutase (427 aa).

Position 265 is an N6-(pyridoxal phosphate)lysine (Lys-265).

It belongs to the class-III pyridoxal-phosphate-dependent aminotransferase family. HemL subfamily. As to quaternary structure, homodimer. It depends on pyridoxal 5'-phosphate as a cofactor.

The protein resides in the cytoplasm. It catalyses the reaction (S)-4-amino-5-oxopentanoate = 5-aminolevulinate. Its pathway is porphyrin-containing compound metabolism; protoporphyrin-IX biosynthesis; 5-aminolevulinate from L-glutamyl-tRNA(Glu): step 2/2. This Stutzerimonas stutzeri (strain A1501) (Pseudomonas stutzeri) protein is Glutamate-1-semialdehyde 2,1-aminomutase.